The chain runs to 260 residues: uncharacterized protein (260 aa).

A signal peptide spans 1–22; sequence MGYLKGFALYISILILIVFIAG. C23 is lipidated: N-palmitoyl cysteine. C23 is lipidated: S-diacylglycerol cysteine.

This sequence belongs to the staphylococcal tandem lipoprotein family.

Its subcellular location is the cell membrane. This is an uncharacterized protein from Staphylococcus aureus (strain MSSA476).